A 65-amino-acid polypeptide reads, in one-letter code: Large ribosomal subunit protein bL35 (65 aa).

The interval 1 to 26 (MPKIKTVRGAAKRFKKTASGGFKRKQ) is disordered. The span at 10–26 (AAKRFKKTASGGFKRKQ) shows a compositional bias: basic residues.

The protein belongs to the bacterial ribosomal protein bL35 family.

The polypeptide is Large ribosomal subunit protein bL35 (Haemophilus ducreyi (strain 35000HP / ATCC 700724)).